The following is a 484-amino-acid chain: Putative sodium/proton-dependent alanine carrier protein YrbD (484 aa).

11 helical membrane passes run 11 to 31 (VLWSTPVIYILLGIGFAFSIM), 66 to 88 (ALSGRVGTGNIAGVATAIAFGGP), 92 to 114 (FWMWAIAFIGAASAFVESTLAQI), 139 to 159 (WFAVLFAAAALIAMAFLMPGV), 172 to 192 (FGISPFVTGCGLVLLLGFIIF), 205 to 225 (IVPFMAIGYILLSLIIIVMNV), 238 to 258 (SAFALDSAFGGLIGMAISWGV), 292 to 312 (AFSVYIDTLFVCSATAFMILF), 350 to 370 (GFGAGFVAIALFFFAFTTIMA), 390 to 410 (WAMLGLKLIILAATFYGTVKT), and 416 to 436 (ALGDAGLGIMVWLNVIAIVLL).

This sequence belongs to the alanine or glycine:cation symporter (AGCS) (TC 2.A.25) family.

Its subcellular location is the cell membrane. This Bacillus subtilis (strain 168) protein is Putative sodium/proton-dependent alanine carrier protein YrbD (yrbD).